The primary structure comprises 51 residues: Large ribosomal subunit protein eL39 (51 aa).

Positions 1-15 (MPSHKSFRTKQKLAK) are enriched in basic residues. The tract at residues 1–21 (MPSHKSFRTKQKLAKAARQNR) is disordered.

This sequence belongs to the eukaryotic ribosomal protein eL39 family. In terms of assembly, component of the large ribosomal subunit (LSU). Mature yeast ribosomes consist of a small (40S) and a large (60S) subunit. The 40S small subunit contains 1 molecule of ribosomal RNA (18S rRNA) and at least 33 different proteins. The large 60S subunit contains 3 rRNA molecules (25S, 5.8S and 5S rRNA) and at least 46 different proteins. eL39 interacts with yih1.

It is found in the cytoplasm. Functionally, component of the ribosome, a large ribonucleoprotein complex responsible for the synthesis of proteins in the cell. The small ribosomal subunit (SSU) binds messenger RNAs (mRNAs) and translates the encoded message by selecting cognate aminoacyl-transfer RNA (tRNA) molecules. The large subunit (LSU) contains the ribosomal catalytic site termed the peptidyl transferase center (PTC), which catalyzes the formation of peptide bonds, thereby polymerizing the amino acids delivered by tRNAs into a polypeptide chain. The nascent polypeptides leave the ribosome through a tunnel in the LSU and interact with protein factors that function in enzymatic processing, targeting, and the membrane insertion of nascent chains at the exit of the ribosomal tunnel. This is Large ribosomal subunit protein eL39 (rpl39) from Schizosaccharomyces pombe (strain 972 / ATCC 24843) (Fission yeast).